Here is a 442-residue protein sequence, read N- to C-terminus: Endothelin receptor type B (442 aa).

The signal sequence occupies residues 1–26 (MQPPPSLCGRALVALVLACGLSRIWG). Over 27 to 101 (EERGFPPDRA…GPIEIKETFK (75 aa)) the chain is Extracellular. A glycan (N-linked (GlcNAc...) asparagine) is linked at N59. A disordered region spans residues 69–88 (AEVPKGDRTAGSPPRTISPP). The helical transmembrane segment at 102 to 126 (YINTVVSCLVFVLGIIGNSTLLRII) threads the bilayer. Residues 127–137 (YKNKCMRNGPN) are Cytoplasmic-facing. The chain crosses the membrane as a helical span at residues 138–163 (ILIASLALGDLLHIVIDIPINVYKLL). Residues 164 to 175 (AEDWPFGAEMCK) lie on the Extracellular side of the membrane. Residues C174 and C255 are joined by a disulfide bond. The helical transmembrane segment at 176–197 (LVPFIQKASVGITVLSLCALSI) threads the bilayer. The Cytoplasmic portion of the chain corresponds to 198-218 (DRYRAVASWSRIKGIGVPKWT). A helical transmembrane segment spans residues 219–243 (AVEIVLIWVVSVVLAVPEAIGFDII). Over 244–271 (TMDYKGSYLRICLLHPVQKTAFMQFYKT) the chain is Extracellular. Residues 272–296 (AKDWWLFSFYFCLPLAITAFFYTLM) traverse the membrane as a helical segment. The Cytoplasmic portion of the chain corresponds to 297–324 (TCEMLRKKSGMQIALNDHLKQRREVAKT). S305 carries the post-translational modification Phosphoserine. The helical transmembrane segment at 325–350 (VFCLVLVFALCWLPLHLSRILKLTLY) threads the bilayer. The Extracellular segment spans residues 351-362 (NQNDPNRCELLS). The chain crosses the membrane as a helical span at residues 363-389 (FLLVLDYIGINMASLNSCINPIALYLV). Over 390 to 442 (SKRFKNCFKSCLCCWCQSFEEKQSLEEKQSCLKFKANDHGYDNFRSSNKYSSS) the chain is Cytoplasmic. 3 S-palmitoyl cysteine lipidation sites follow: C402, C403, and C405. Residue S419 is modified to Phosphoserine. Phosphotyrosine is present on Y439. Residues S440, S441, and S442 each carry the phosphoserine modification.

The protein belongs to the G-protein coupled receptor 1 family. Endothelin receptor subfamily. EDNRB sub-subfamily. Post-translationally, palmitoylation of Cys-402 was confirmed by the palmitoylation of Cys-402 in a deletion mutant lacking both Cys-403 and Cys-405. As to expression, expressed in placental stem villi vessels, but not in cultured placental villi smooth muscle cells.

It localises to the cell membrane. In terms of biological role, non-specific receptor for endothelin 1, 2, and 3. Mediates its action by association with G proteins that activate a phosphatidylinositol-calcium second messenger system. In Homo sapiens (Human), this protein is Endothelin receptor type B.